Here is a 711-residue protein sequence, read N- to C-terminus: Dixin (711 aa).

The N-myristoyl glycine moiety is linked to residue leucine 2. Valine 13 carries the phosphoserine modification. The 134-residue stretch at 20-153 (EQQLQAYVAW…LVLALAAHFK (134 aa)) folds into the Calponin-homology (CH) domain. Residues 153 to 326 (KPGSSRTVSQ…LEKEMEEAKK (174 aa)) are actin-binding. The residue at position 212 (serine 212) is a Phosphoserine. Disordered regions lie at residues 233-258 (GQQK…AKSE), 271-298 (VIIP…PGSR), and 584-623 (TQKK…SSPA). The segment covering 237 to 254 (SPSESSCSSLTSPSPIHS) has biased composition (low complexity). Serine 257 bears the Phosphoserine mark. Basic and acidic residues predominate over residues 278-295 (IENRTDEPDSPSSRDWRP). The stretch at 279-452 (ENRTDEPDSP…NRLLGEYKKE (174 aa)) forms a coiled coil. Over residues 597 to 623 (PRNQASSEYRASWPPNSTLPHSQSSPA) the composition is skewed to polar residues. One can recognise a DIX domain in the interval 600-680 (QASSEYRASW…HFKALDPEFG (81 aa)). Serine 618 carries the post-translational modification Phosphoserine.

It belongs to the DIXDC1 family. May bind filamentous actin. Directly interacts (via DIX domain) with DVL2 (via DIX domain). Interacts with gamma-tubulin. Interacts with the complex composed of DVL2 and Rac. Interacts with AXIN1; competes with MAP3K1. Interacts with MAP3K4 preventing MAP3K4 interaction with AXIN1. Post-translationally, phosphorylated on tyrosine and serine residues. Polyubiquitinated, leading to its proteasomal degradation. WNT3A signaling increases DIXDC1 protein levels by inhibiting its ubiquitination and subsequent degradation. In terms of tissue distribution, abundantly expressed in brain and testis and to a lower extent in lung, kidney, colon, ovary and urinary bladder. Expressed in brain, liver, testis and spleen (at protein level). Expressed throughout the brain with strong expression in main and accessory olfactory bulbs, cerebral cortex, piriform cortex, hippocampus, habenular nucleus, dorsal thalamus, superior and inferior colliculi and cerebellum.

It localises to the cell junction. The protein localises to the focal adhesion. It is found in the cytoplasm. Its subcellular location is the cytoskeleton. The protein resides in the stress fiber. Positive effector of the Wnt signaling pathway; activates WNT3A signaling via DVL2. Regulates JNK activation by AXIN1 and DVL2. The chain is Dixin (Dixdc1) from Mus musculus (Mouse).